We begin with the raw amino-acid sequence, 345 residues long: Holliday junction branch migration complex subunit RuvB (345 aa).

Residues 1-182 (MQRLVEVESV…FGMHFRMQFY (182 aa)) form a large ATPase domain (RuvB-L) region. ATP-binding positions include L21, R22, G63, K66, T67, T68, 129-131 (EDY), R172, Y182, and R219. T67 is a binding site for Mg(2+). Positions 183–253 (TEIELAKIIQ…RCKYALDELG (71 aa)) are small ATPAse domain (RuvB-S). Positions 256–345 (ESGFDEMDIN…EDDLTQGKLF (90 aa)) are head domain (RuvB-H). Residues R310 and R315 each contribute to the DNA site.

The protein belongs to the RuvB family. In terms of assembly, homohexamer. Forms an RuvA(8)-RuvB(12)-Holliday junction (HJ) complex. HJ DNA is sandwiched between 2 RuvA tetramers; dsDNA enters through RuvA and exits via RuvB. An RuvB hexamer assembles on each DNA strand where it exits the tetramer. Each RuvB hexamer is contacted by two RuvA subunits (via domain III) on 2 adjacent RuvB subunits; this complex drives branch migration. In the full resolvosome a probable DNA-RuvA(4)-RuvB(12)-RuvC(2) complex forms which resolves the HJ.

Its subcellular location is the cytoplasm. It catalyses the reaction ATP + H2O = ADP + phosphate + H(+). Functionally, the RuvA-RuvB-RuvC complex processes Holliday junction (HJ) DNA during genetic recombination and DNA repair, while the RuvA-RuvB complex plays an important role in the rescue of blocked DNA replication forks via replication fork reversal (RFR). RuvA specifically binds to HJ cruciform DNA, conferring on it an open structure. The RuvB hexamer acts as an ATP-dependent pump, pulling dsDNA into and through the RuvAB complex. RuvB forms 2 homohexamers on either side of HJ DNA bound by 1 or 2 RuvA tetramers; 4 subunits per hexamer contact DNA at a time. Coordinated motions by a converter formed by DNA-disengaged RuvB subunits stimulates ATP hydrolysis and nucleotide exchange. Immobilization of the converter enables RuvB to convert the ATP-contained energy into a lever motion, pulling 2 nucleotides of DNA out of the RuvA tetramer per ATP hydrolyzed, thus driving DNA branch migration. The RuvB motors rotate together with the DNA substrate, which together with the progressing nucleotide cycle form the mechanistic basis for DNA recombination by continuous HJ branch migration. Branch migration allows RuvC to scan DNA until it finds its consensus sequence, where it cleaves and resolves cruciform DNA. In Aliarcobacter butzleri (strain RM4018) (Arcobacter butzleri), this protein is Holliday junction branch migration complex subunit RuvB.